Consider the following 567-residue polypeptide: Major facilitator superfamily transporter MG061 (567 aa).

A run of 12 helical transmembrane segments spans residues Ile15–Ile35, Trp78–Phe98, Val104–Leu124, Gly193–Val213, Ile230–Phe250, Val264–Phe284, Leu321–Phe341, Thr363–Phe383, Ile405–Gly425, Phe426–Ser446, Leu462–Ile482, and Pro503–Val523.

Belongs to the major facilitator superfamily.

The protein localises to the cell membrane. The polypeptide is Major facilitator superfamily transporter MG061 (Mycoplasma genitalium (strain ATCC 33530 / DSM 19775 / NCTC 10195 / G37) (Mycoplasmoides genitalium)).